The following is a 595-amino-acid chain: Probable inactive glycosyltransferase 25 family member 3 (595 aa).

A signal peptide spans 1–24 (MRAAPAAPLLQLLLLLGPRPEAAG). Asn-75, Asn-153, Asn-237, and Asn-360 each carry an N-linked (GlcNAc...) asparagine glycan. The disordered stretch occupies residues 576 to 595 (RLDLAGGSGHSLRPHPRDEL). The Prevents secretion from ER motif lies at 592-595 (RDEL).

It belongs to the glycosyltransferase 25 family.

The protein localises to the endoplasmic reticulum lumen. Functionally, probable cell adhesion protein involved in leukocyte transmigration across the blood-brain barrier. Does not express any beta-galactosyltransferase activity in vitro. The sequence is that of Probable inactive glycosyltransferase 25 family member 3 (CERCAM) from Bos taurus (Bovine).